Reading from the N-terminus, the 2570-residue chain is Stabilin-1 (2570 aa).

An N-terminal signal peptide occupies residues 1 to 25; sequence MAGPRGLLPLCLLAFCLAGFSFVRG. Topologically, residues 26-2478 are extracellular; sequence QVLFKGCDVK…LAPEAPPVAA (2453 aa). EGF-like domains follow at residues 110 to 148, 156 to 193, 195 to 229, and 232 to 271; these read HECP…SACQ, FGPD…PHCD, ELPV…QGSE, and APNP…MVCL. 11 disulfide bridges follow: Cys112/Cys126, Cys120/Cys136, Cys138/Cys147, Cys160/Cys171, Cys164/Cys181, Cys183/Cys192, Cys199/Cys210, Cys204/Cys217, Cys236/Cys247, Cys241/Cys257, and Cys259/Cys270. A glycan (N-linked (GlcNAc...) asparagine) is linked at Asn133. N-linked (GlcNAc...) asparagine glycans are attached at residues Asn286, Asn312, Asn413, Asn606, Asn673, Asn712, and Asn745. 2 consecutive FAS1 domains span residues 356-494 and 506-641; these read YGHL…TGLR and KRTI…DGIL. One can recognise an EGF-like 5 domain in the interval 728-768; that stretch reads DCTQCPGGFSNPCYGKGNCSDGIQGNGACLCFPDYKGIACH. Cystine bridges form between Cys732-Cys746, Cys740-Cys756, and Cys758-Cys767. Asn816 is a glycosylation site (N-linked (GlcNAc...) asparagine). EGF-like domains are found at residues 818-858, 861-903, 904-946, and 947-986; these read SMGD…DGFS, PSNP…RVCV, AIDE…YQCS, and PIDP…DGFS. Intrachain disulfides connect Cys822–Cys837, Cys831–Cys846, Cys865–Cys879, Cys873–Cys889, Cys891–Cys902, Cys908–Cys922, Cys916–Cys932, Cys934–Cys945, Cys951–Cys964, and Cys958–Cys974. 2 consecutive FAS1 domains span residues 988 to 1118 and 1128 to 1253; these read YGDI…SQVL and GQGL…SGVL. 6 N-linked (GlcNAc...) asparagine glycosylation sites follow: Asn1087, Asn1096, Asn1170, Asn1178, Asn1222, and Asn1274. The region spanning 1327–1392 is the Laminin EGF-like 1 domain; it reads TLCEPCPGGL…CDCAHGLCQE (66 aa). 3 disulfide bridges follow: Cys1332-Cys1346, Cys1340-Cys1356, and Cys1358-Cys1367. The N-linked (GlcNAc...) asparagine glycan is linked to Asn1378. Intrachain disulfides connect Cys1379-Cys1390, Cys1383-Cys1400, Cys1402-Cys1411, Cys1420-Cys1430, Cys1424-Cys1440, Cys1442-Cys1453, Cys1459-Cys1472, Cys1466-Cys1482, Cys1484-Cys1495, Cys1501-Cys1514, Cys1508-Cys1524, Cys1526-Cys1538, Cys1544-Cys1557, Cys1551-Cys1567, and Cys1569-Cys1581. EGF-like domains lie at 1416-1454, 1455-1496, 1497-1539, and 1540-1582; these read TSPQ…IFCS, EVDP…ELCQ, EINS…RTCE, and LLDP…LTCR. Asn1471 carries N-linked (GlcNAc...) asparagine glycosylation. 2 consecutive FAS1 domains span residues 1582–1708 and 1724–1864; these read RARV…DRVL and PRRN…DQLL. Residues Asn1626 and Asn1727 are each glycosylated (N-linked (GlcNAc...) asparagine). The 66-residue stretch at 1966 to 2031 folds into the Laminin EGF-like 2 domain; the sequence is SECQACPGGP…RCTVHGRCDE (66 aa). 15 disulfides stabilise this stretch: Cys1971–Cys1985, Cys1979–Cys1995, Cys1997–Cys2006, Cys2018–Cys2029, Cys2023–Cys2039, Cys2041–Cys2050, Cys2060–Cys2070, Cys2064–Cys2076, Cys2078–Cys2089, Cys2095–Cys2108, Cys2102–Cys2117, Cys2119–Cys2130, Cys2136–Cys2150, Cys2144–Cys2160, and Cys2162–Cys2173. EGF-like domains are found at residues 2056–2090, 2091–2131, and 2132–2174; these read LQPV…RVCT, VADL…WSCR, and ARNP…LQCL. Asn2107 carries an N-linked (GlcNAc...) asparagine glycan. The Link domain maps to 2206–2301; sequence RAGVFHLQAT…SERWDAYCFR (96 aa). Residues Asn2222, Asn2261, Asn2290, Asn2334, Asn2347, Asn2379, Asn2393, Asn2400, and Asn2424 are each glycosylated (N-linked (GlcNAc...) asparagine). 2 disulfides stabilise this stretch: Cys2230/Cys2299 and Cys2254/Cys2275. Positions 2322-2459 constitute an FAS1 7 domain; sequence NGKLLDVLAA…GIIHALASPL (138 aa). A helical transmembrane segment spans residues 2479–2499; the sequence is GVGAVLAAGALLGLVAGALYL. At 2500–2570 the chain is on the cytoplasmic side; that stretch reads RARGKPMGFG…PDTQRILTVK (71 aa).

Interacts with CHID1. High levels found in spleen, lymph node, liver and placenta. Also expressed in endothelial cells.

It localises to the membrane. Acts as a scavenger receptor for acetylated low density lipoprotein. Binds to both Gram-positive and Gram-negative bacteria and may play a role in defense against bacterial infection. When inhibited in endothelial tube formation assays, there is a marked decrease in cell-cell interactions, suggesting a role in angiogenesis. Involved in the delivery of newly synthesized CHID1/SI-CLP from the biosynthetic compartment to the endosomal/lysosomal system. This chain is Stabilin-1 (STAB1), found in Homo sapiens (Human).